A 148-amino-acid polypeptide reads, in one-letter code: uncharacterized protein (148 aa).

3 helical membrane-spanning segments follow: residues 20–42 (YYSK…IANY), 52–74 (YFLM…VRCY), and 118–135 (IIRY…CTYI).

The protein localises to the cell membrane. This is an uncharacterized protein from Rickettsia prowazekii (strain Madrid E).